A 65-amino-acid chain; its full sequence is Large ribosomal subunit protein bL35 (65 aa).

A disordered region spans residues 1-65; sequence MPKMKTNRAA…GRLDRMLPYL (65 aa). A compositionally biased stretch (basic residues) spans 10–44; that stretch reads AAKRFRKTASGKYKAGHANRSHILTKKATKRKRNL. Over residues 50–65 the composition is skewed to basic and acidic residues; it reads VRAEDAGRLDRMLPYL.

The protein belongs to the bacterial ribosomal protein bL35 family.

The polypeptide is Large ribosomal subunit protein bL35 (Xylella fastidiosa (strain M12)).